The sequence spans 100 residues: Small ribosomal subunit protein uS14c (100 aa).

Belongs to the universal ribosomal protein uS14 family. Part of the 30S ribosomal subunit.

The protein localises to the plastid. The protein resides in the chloroplast. Functionally, binds 16S rRNA, required for the assembly of 30S particles. The protein is Small ribosomal subunit protein uS14c of Huperzia lucidula (Shining clubmoss).